A 154-amino-acid polypeptide reads, in one-letter code: Ribonuclease H (154 aa).

Positions 1–142 constitute an RNase H type-1 domain; sequence MTKQVEIFTD…CDELARQGAN (142 aa). Residues Asp-10, Glu-48, Asp-70, and Asp-134 each contribute to the Mg(2+) site.

The protein belongs to the RNase H family. As to quaternary structure, monomer. Mg(2+) serves as cofactor.

It localises to the cytoplasm. The enzyme catalyses Endonucleolytic cleavage to 5'-phosphomonoester.. In terms of biological role, endonuclease that specifically degrades the RNA of RNA-DNA hybrids. The sequence is that of Ribonuclease H from Yersinia pestis bv. Antiqua (strain Antiqua).